Here is a 399-residue protein sequence, read N- to C-terminus: Phosphatidate cytidylyltransferase 5, chloroplastic (399 aa).

The transit peptide at 1 to 26 directs the protein to the chloroplast; the sequence is MAPFVEVCRYKPLPLSLSSLCTCPCR. A run of 6 helical transmembrane segments spans residues 123 to 143, 187 to 207, 217 to 237, 266 to 286, 309 to 329, and 333 to 353; these read VGGIVLAGGWVFTVAVAAAVL, FGHIDISITSAAFVVAMALLL, LSSTMFGLFYCGYLPCFWVKL, VGLVAILISFCGIIASDTFAF, AFAGLVGCISITILLSKSLSW, and LVSTIAFGVLNFFGSVFGDLT.

Belongs to the CDS family. Mg(2+) serves as cofactor.

The protein resides in the plastid. It is found in the chloroplast membrane. It carries out the reaction a 1,2-diacyl-sn-glycero-3-phosphate + CTP + H(+) = a CDP-1,2-diacyl-sn-glycerol + diphosphate. It functions in the pathway phospholipid metabolism; CDP-diacylglycerol biosynthesis; CDP-diacylglycerol from sn-glycerol 3-phosphate: step 3/3. Its activity is regulated as follows. Highest activities is obtained at about 30 mM CTP and 2 mM phosphatidic acid (PA). May be involved in the synthesis of minor phospholipids and in modulation of IP3-mediated signal transduction. Promotes the biosynthesis of plastidial phosphatidylglycerol (PG) which is required for structure and function of thylakoid membranes and, hence, for photoautotrophic growth. This Arabidopsis thaliana (Mouse-ear cress) protein is Phosphatidate cytidylyltransferase 5, chloroplastic.